The following is a 365-amino-acid chain: Chorismate synthase (365 aa).

2 residues coordinate NADP(+): Arg48 and Arg54. FMN is bound by residues 125-127, 237-238, Gly277, 292-296, and Arg318; these read RSS, NA, and KPTSS.

It belongs to the chorismate synthase family. As to quaternary structure, homotetramer. Requires FMNH2 as cofactor.

The enzyme catalyses 5-O-(1-carboxyvinyl)-3-phosphoshikimate = chorismate + phosphate. Its pathway is metabolic intermediate biosynthesis; chorismate biosynthesis; chorismate from D-erythrose 4-phosphate and phosphoenolpyruvate: step 7/7. Functionally, catalyzes the anti-1,4-elimination of the C-3 phosphate and the C-6 proR hydrogen from 5-enolpyruvylshikimate-3-phosphate (EPSP) to yield chorismate, which is the branch point compound that serves as the starting substrate for the three terminal pathways of aromatic amino acid biosynthesis. This reaction introduces a second double bond into the aromatic ring system. The polypeptide is Chorismate synthase (Paracidovorax citrulli (strain AAC00-1) (Acidovorax citrulli)).